A 115-amino-acid polypeptide reads, in one-letter code: MFSIIQKIEKEQIKKNIPIFRSGDTIEVKVWVIEGSKKRLQSFEGIVIAIKNRCLNSSFTVRKISNGEGVERVFQTHSHGIEEILVKRKGLVRKAKLYYLRTRTGKAARIKERLN.

Belongs to the bacterial ribosomal protein bL19 family.

Its function is as follows. This protein is located at the 30S-50S ribosomal subunit interface and may play a role in the structure and function of the aminoacyl-tRNA binding site. In Buchnera aphidicola subsp. Acyrthosiphon pisum (strain Tuc7), this protein is Large ribosomal subunit protein bL19.